The following is a 437-amino-acid chain: Magnetosome protein MamN (437 aa).

The next 11 membrane-spanning stretches (helical) occupy residues 26-46 (LAVL…GSYT), 53-73 (SVYF…ALLA), 95-115 (WILV…NSLV), 136-156 (VPVI…TMIG), 174-194 (FIAG…VFFE), 226-246 (LLSY…LAGP), 252-268 (GWIA…LGRF), 281-301 (DILF…VGIL), 320-340 (AILL…GTSA), 358-378 (AAWW…LPGA), and 416-436 (WGMP…AVLV).

It belongs to the arsenite-antimonite (ArsB) efflux (TC 2.A.45) family.

The protein localises to the magnetosome membrane. Plays a role in biomineralization; might regulate pH in the magnetosome. The polypeptide is Magnetosome protein MamN (mamN) (Paramagnetospirillum magneticum (strain ATCC 700264 / AMB-1) (Magnetospirillum magneticum)).